A 394-amino-acid polypeptide reads, in one-letter code: Protein DDI1 homolog 2 (394 aa).

A Ubiquitin-like domain is found at 1–81; the sequence is MLITVYCVRR…VILRQRETPE (81 aa). A disordered region spans residues 82–128; the sequence is ARPAAPFPGLDFSTIAVPGSSSQPAPSQPQAPPPPPPDTSSFPQGLD. A compositionally biased stretch (pro residues) spans 107 to 119; that stretch reads PSQPQAPPPPPPD. Asp247 is an active-site residue. Positions 371 to 390 match the Ubiquitin-binding motif; that stretch reads EEIADRELAEVLQKSAEEAD.

It belongs to the DDI1 family. As to quaternary structure, homodimer.

It is found in the cytoplasm. The protein resides in the cytosol. The protein localises to the chromosome. Functionally, aspartic protease that mediates the cleavage of NFE2L1/NRF1 at 'Leu-104', thereby promoting release of NFE2L1/NRF1 from the endoplasmic reticulum membrane. Ubiquitination of NFE2L1/NRF1 is a prerequisite for cleavage, suggesting that DDI2 specifically recognizes and binds ubiquitinated NFE2L1/NRF1. Seems to act as a proteasomal shuttle which links the proteasome and replication fork proteins like RTF2. Required for cellular survival following replication stress. This chain is Protein DDI1 homolog 2 (ddi2), found in Xenopus tropicalis (Western clawed frog).